The primary structure comprises 409 residues: Elongation factor Tu (409 aa).

A tr-type G domain is found at 10 to 214 (KPHVNIGTIG…AVDSYIPTPE (205 aa)). Positions 19–26 (GHVDHGKT) are G1. 19 to 26 (GHVDHGKT) contacts GTP. A Mg(2+)-binding site is contributed by Thr-26. Positions 60–64 (GITIN) are G2. Positions 81 to 84 (DCPG) are G3. Residues 81 to 85 (DCPGH) and 136 to 139 (NKVD) contribute to the GTP site. Positions 136–139 (NKVD) are G4. The segment at 174 to 176 (SGL) is G5.

It belongs to the TRAFAC class translation factor GTPase superfamily. Classic translation factor GTPase family. EF-Tu/EF-1A subfamily. Monomer.

The protein localises to the cytoplasm. It carries out the reaction GTP + H2O = GDP + phosphate + H(+). Functionally, GTP hydrolase that promotes the GTP-dependent binding of aminoacyl-tRNA to the A-site of ribosomes during protein biosynthesis. The polypeptide is Elongation factor Tu (Cyanothece sp. (strain PCC 7425 / ATCC 29141)).